Here is a 1464-residue protein sequence, read N- to C-terminus: Alpha-glucan water dikinase, chloroplastic (1464 aa).

The N-terminal 77 residues, 1-77, are a transit peptide targeting the chloroplast; sequence MSNSLGNNLL…KRAFSSSPHA (77 aa). The active-site Tele-phosphohistidine intermediate is histidine 1069.

Belongs to the PEP-utilizing enzyme family. In terms of assembly, homodimer. Requires Mg(2+) as cofactor. In terms of tissue distribution, expressed in leaves.

The protein localises to the plastid. It localises to the chloroplast. It carries out the reaction [(1-&gt;4)-alpha-D-glucosyl](n) + n ATP + n H2O = [(1-&gt;4)-6-phospho-alpha-D-glucosyl](n) + n AMP + n phosphate + 2n H(+). The catalysed reaction is ATP + protein L-histidine = ADP + protein N-phospho-L-histidine.. In terms of biological role, mediates the incorporation of phosphate into starch-like alpha-glucan, mostly at the C-6 position of glucose units. Acts as an overall regulator of starch mobilization. Required for starch degradation, suggesting that the phosphate content of starch regulates its degradability. More active on alpha-1,6 branched amylopectin. This Solanum tuberosum (Potato) protein is Alpha-glucan water dikinase, chloroplastic (R1).